The primary structure comprises 152 residues: Ribonuclease H (152 aa).

The RNase H type-1 domain maps to 6-147 (KKNRVIAYTD…ADELANKAIA (142 aa)). Residues aspartate 15, glutamate 53, aspartate 75, and aspartate 139 each contribute to the Mg(2+) site.

The protein belongs to the RNase H family. In terms of assembly, monomer. Requires Mg(2+) as cofactor.

Its subcellular location is the cytoplasm. The catalysed reaction is Endonucleolytic cleavage to 5'-phosphomonoester.. Its function is as follows. Endonuclease that specifically degrades the RNA of RNA-DNA hybrids. The chain is Ribonuclease H from Francisella tularensis subsp. tularensis (strain FSC 198).